Consider the following 207-residue polypeptide: Small ribosomal subunit protein uS4 (207 aa).

The interval 33–54 is disordered; the sequence is KLDSKPGQHGRTSGARTSDYGN. Over residues 42 to 53 the composition is skewed to polar residues; that stretch reads GRTSGARTSDYG. Residues 97–160 form the S4 RNA-binding domain; it reads SRLDNVVYRM…KKQVRIAEAL (64 aa).

Belongs to the universal ribosomal protein uS4 family. In terms of assembly, part of the 30S ribosomal subunit. Contacts protein S5. The interaction surface between S4 and S5 is involved in control of translational fidelity.

Its function is as follows. One of the primary rRNA binding proteins, it binds directly to 16S rRNA where it nucleates assembly of the body of the 30S subunit. In terms of biological role, with S5 and S12 plays an important role in translational accuracy. The sequence is that of Small ribosomal subunit protein uS4 from Cupriavidus necator (strain ATCC 17699 / DSM 428 / KCTC 22496 / NCIMB 10442 / H16 / Stanier 337) (Ralstonia eutropha).